We begin with the raw amino-acid sequence, 676 residues long: MSRRALRRLRGEQRGQEPLGPGALHFDLRDDDDAEEEGPKRELGVRRPGGAGKEGVRVNNRFELINIDDLEDDPVVNGERSGCALTDAVAPGNKGRGQRGNTESKTDGDDTETVPSEQSHASGKLRKKKKKQKNKKSSTGEASENGLEDIDRILERIEDSTGLNRPGPAPLSSRKHVLYVEHRHLNPDTELKRYFGARAILGEQRPRQRQRVYPKCTWLTTPKSTWPRYSKPGLSMRLLESKKGLSFFAFEHSEEYQQAQHKFLVAVESMEPNNIVVLLQTSPYHVDSLLQLSDACRFQEDQEMARDLVERALYSMECAFHPLFSLTSGACRLDYRRPENRSFYLALYKQMSFLEKRGCPRTALEYCKLILSLEPDEDPLCMLLLIDHLALRARNYEYLIRLFQEWEAHRNLSQLPNFAFSVPLAYFLLSQQTDLPECEQSSARQKASLLIQQALTMFPGVLLPLLESCSVRPDASVSSHRFFGPNAEISQPPALSQLVNLYLGRSHFLWKEPATMSWLEENVHEVLQAVDAGDPAVEACENRRKVLYQRAPRNIHRHVILSEIKEAVAALPPDVTTQSVMGFDPLPPSDTIYSYVRPERLSPISHGNTIALFFRSLLPNYTMEGERPEEGVAGGLNRNQGLNRLMLAVRDMMANFHLNDLEAPHEDDAEGEGEWD.

Disordered regions lie at residues 1–59 (MSRR…VRVN) and 85–147 (LTDA…ENGL). The span at 123 to 136 (GKLRKKKKKQKNKK) shows a compositional bias: basic residues. At S602 the chain carries Phosphoserine.

Belongs to the TCF25 family. As to quaternary structure, component of the ribosome quality control complex (RQC), composed of the E3 ubiquitin ligase LTN1, TCF25 and NEMF associated with the 60S ribosomal subunit. Interacts (via C-terminus) with NFATC4; the interaction leads to suppresson of NFATC4 transcription factor activity and is reduced following stimulation with angiotensin-2. Interacts with XIAP. In the embryo, widely expressed with highest levels in brain. In the adult, highest expression is found in the heart. Repressed in cardiac tissue of patients with heart failure (at protein level). mRNA levels in the heart are unchanged in patients with heart failure.

It is found in the nucleus. The protein localises to the cytoplasm. It localises to the cytosol. Component of the ribosome quality control complex (RQC), a ribosome-associated complex that mediates ubiquitination and extraction of incompletely synthesized nascent chains for proteasomal degradation. In the RQC complex, required to promote formation of 'Lys-48'-linked polyubiquitin chains during ubiquitination of incompletely synthesized proteins by LTN1. May negatively regulate the calcineurin-NFAT signaling cascade by suppressing the activity of transcription factor NFATC4. May play a role in cell death control. The chain is Ribosome quality control complex subunit TCF25 from Homo sapiens (Human).